A 285-amino-acid polypeptide reads, in one-letter code: Ribonuclease Z (285 aa).

The Zn(2+) site is built by H61, H63, D65, H66, H152, D175, and H239. The active-site Proton acceptor is the D65.

Belongs to the RNase Z family. In terms of assembly, homodimer. The cofactor is Zn(2+).

The catalysed reaction is Endonucleolytic cleavage of RNA, removing extra 3' nucleotides from tRNA precursor, generating 3' termini of tRNAs. A 3'-hydroxy group is left at the tRNA terminus and a 5'-phosphoryl group is left at the trailer molecule.. Its function is as follows. Zinc phosphodiesterase, which displays some tRNA 3'-processing endonuclease activity. Probably involved in tRNA maturation, by removing a 3'-trailer from precursor tRNA. In Mycobacterium sp. (strain JLS), this protein is Ribonuclease Z.